Consider the following 333-residue polypeptide: Adenosine deaminase (333 aa).

2 residues coordinate Zn(2+): H12 and H14. The substrate site is built by H14, D16, and G170. A Zn(2+)-binding site is contributed by H197. Residue E200 is the Proton donor of the active site. D278 provides a ligand contact to Zn(2+). Residue D279 coordinates substrate.

Belongs to the metallo-dependent hydrolases superfamily. Adenosine and AMP deaminases family. Adenosine deaminase subfamily. The cofactor is Zn(2+).

The enzyme catalyses adenosine + H2O + H(+) = inosine + NH4(+). It carries out the reaction 2'-deoxyadenosine + H2O + H(+) = 2'-deoxyinosine + NH4(+). Functionally, catalyzes the hydrolytic deamination of adenosine and 2-deoxyadenosine. This is Adenosine deaminase from Pseudoalteromonas translucida (strain TAC 125).